Consider the following 109-residue polypeptide: Large ribosomal subunit protein uL24 (109 aa).

It belongs to the universal ribosomal protein uL24 family. Part of the 50S ribosomal subunit.

One of two assembly initiator proteins, it binds directly to the 5'-end of the 23S rRNA, where it nucleates assembly of the 50S subunit. Its function is as follows. One of the proteins that surrounds the polypeptide exit tunnel on the outside of the subunit. In Syntrophobacter fumaroxidans (strain DSM 10017 / MPOB), this protein is Large ribosomal subunit protein uL24.